Reading from the N-terminus, the 476-residue chain is MRSEKEGAGGLRAAVAARGPSGREKLSALEVQFHRDSQQQEAETPPTSSSGCGGGAGKPREEKRTALSKVVIRRLPPGLTKEQLEEQLRPLPAHDYFEFFAADLSLYPHLYSRAYINFRNPDDILLFRDRFDGYIFLDSKGLEYPAVVEFAPFQKIAKKKLRKKDAKTGSIEDDPEYKKFLETYCVEEEKTSANPETLLGEMEAKTRELIARRTTPLLEYIKNRKLEKQRIREEKREERRRRELEKKRLREEEKRRRREEERCKKKETDKQKKIAEKEVRIKLLKKPEKGEEPTTEKPKERGEEIDTGGGKQESCAPGAVVKARPMEGSLEEPQETSHSGSDKEHRDVERSQEQESEAQRYHVDDGRRHRAHHEPERLSRRSEDEQRWGKGPGQDRGKKGSQDSGAPGEAMERLGRAQRCDDSPAPRKERLANKDRPALQLYDPGARFRARECGGNRRICKAEGSGTGPEKREEAE.

The segment at 1–63 (MRSEKEGAGG…GGAGKPREEK (63 aa)) is disordered. Over residues 21 to 38 (SGREKLSALEVQFHRDSQ) the composition is skewed to basic and acidic residues. The tract at residues 66–140 (ALSKVVIRRL…FDGYIFLDSK (75 aa)) is required for interaction with UPF2. Composition is skewed to basic and acidic residues over residues 250–304 (REEE…RGEE), 340–401 (GSDK…KKGS), and 410–437 (AMERLGRAQRCDDSPAPRKERLANKDRP). The disordered stretch occupies residues 250–476 (REEEKRRRRE…TGPEKREEAE (227 aa)). Ser-341 carries the post-translational modification Phosphoserine. The tract at residues 421-434 (DDSPAPRKERLANK) is required for association with EIF4A3 and ECJ core components CASC3, MAGOH and RBM8A.

The protein belongs to the RENT3 family. In terms of assembly, found in a post-splicing messenger ribonucleoprotein (mRNP) complex. Associates with the exon junction complex (EJC). Interacts with UPF2 and RBM8A. Interacts with DHX34; the interaction is RNA-independent. In terms of tissue distribution, isoform 1 is strongly expressed in testis, uterus, muscle, fetal brain and spinal cord. Isoform 2 is strongly expressed in fetal brain and spinal cord.

The protein localises to the nucleus. It is found in the cytoplasm. Involved in nonsense-mediated decay (NMD) of mRNAs containing premature stop codons by associating with the nuclear exon junction complex (EJC) and serving as link between the EJC core and NMD machinery. Recruits UPF2 at the cytoplasmic side of the nuclear envelope and the subsequent formation of an UPF1-UPF2-UPF3 surveillance complex (including UPF1 bound to release factors at the stalled ribosome) is believed to activate NMD. However, UPF3A is shown to be only marginally active in NMD as compared to UPF3B. Binds spliced mRNA upstream of exon-exon junctions. In vitro, weakly stimulates translation. In Homo sapiens (Human), this protein is Regulator of nonsense transcripts 3A (UPF3A).